Consider the following 351-residue polypeptide: Mitochondrial mRNA pseudouridine synthase RPUSD3 (351 aa).

Residues 1–25 constitute a mitochondrion transit peptide; it reads MRAVLAREMDGRRVLGRFWSGWRRG. Positions 33 to 58 are disordered; that stretch reads EDAGFGTEARHQRQPRGSCQRSGPLG. Residue Ser71 is modified to Phosphoserine.

This sequence belongs to the pseudouridine synthase RluA family. In terms of assembly, forms a regulatory protein-RNA complex, consisting of RCC1L, NGRN, RPUSD3, RPUSD4, TRUB2, FASTKD2 and 16S mt-rRNA.

The protein localises to the mitochondrion matrix. The enzyme catalyses a uridine in mRNA = a pseudouridine in mRNA. Its function is as follows. Catalyzes uridine to pseudouridine isomerization (pseudouridylation) of specific mitochondrial mRNAs (mt-mRNAs), a post-transcriptional modification necessary for their translation. Acts at position 390 in COXI mt-mRNA and at position 697-699 in mitochondrial COXIII mt-mRNA. As a component of a functional protein-RNA module, consisting of RCC1L, NGRN, RPUSD3, RPUSD4, TRUB2, FASTKD2 and 16S mitochondrial ribosomal RNA (16S mt-rRNA), controls 16S mt-rRNA abundance and may play a role in mitochondrial ribosome biogenesis. This chain is Mitochondrial mRNA pseudouridine synthase RPUSD3, found in Homo sapiens (Human).